A 778-amino-acid chain; its full sequence is MIRTVTRPRQWQRWVYSSCLLQRAVPPAAARQQPRFTTSHKANHFGYHQPIAPVTHAPITREDDFVLRSVFDYPQFWQDFTSVPGGIPVGLFRNSFLKEPRGMLTFAYVSLKKARAVVAKVLAASSVTEYRLIVRDLDRLSDILCRVLDMADFVRVTHPDPEIQQNASKAWESVYEYMNELNTMTGLHDQLATAMANPDVTVVWSEEEKTVAEVLKLDFTKSAVSLPQKYRDRFVQLSSEISAVGSAFVQEMAPEQETVVLPSSDLRGMDPVRARDLTRRGKVYLPTLSGEAVMALRTVHDADARKHIFYASRTASRRSVQMLEYLMRLRSELASLSGFESYGHLALRDRMMAKSPEAVDQFLRALVESNRPKAMQEMAELLAEKQKAYPQTNSLDPWDKDYYSDIIRRPLRVAGRQGDLLSSYFSLGVPLVGETWHPDVRRLDVVSDTDGHVAVLYCDLFTRPNKSPNPAHFTLRCSREIFASEMEEVWEQTQQSNQKSMFGSPELAATDGMTFSRHGDSIKQLPTIALVCDFPQPSKHGDQPALLSFLQLETLFHEMGHAIHSVLARTSFQTVAGTRCATDLAELPSTLMEFFAADAAVLGQFARHHETNEPLPYRMVAQKARQTRRFEALDTENQIVTAMFDQALHSPRAGEPGFDPTAIFHALQRTHSCAPPDPPGTSWPGFFGHLSGYGSVYYSYLFDRVLAQRVWDVVFKAGERRAALSRENGEKLKQSLLKWGGARDPWKCLAEALDDDRLAEGGEEAMALVGSWGSTKPR.

The transit peptide at 1 to 37 (MIRTVTRPRQWQRWVYSSCLLQRAVPPAAARQQPRFT) directs the protein to the mitochondrion. H557 is a binding site for Zn(2+). E558 is an active-site residue. Zn(2+) contacts are provided by H561 and H564.

It belongs to the peptidase M3 family. Zn(2+) serves as cofactor.

It is found in the mitochondrion matrix. It carries out the reaction Release of an N-terminal octapeptide as second stage of processing of some proteins imported into the mitochondrion.. Functionally, cleaves proteins, imported into the mitochondrion, to their mature size. While most mitochondrial precursor proteins are processed to the mature form in one step by mitochondrial processing peptidase (MPP), the sequential cleavage by MIP of an octapeptide after initial processing by MPP is a required step for a subgroup of nuclear-encoded precursor proteins destined for the matrix or the inner membrane. The protein is Mitochondrial intermediate peptidase (OCT1) of Chaetomium globosum (strain ATCC 6205 / CBS 148.51 / DSM 1962 / NBRC 6347 / NRRL 1970) (Soil fungus).